Consider the following 216-residue polypeptide: Adenylate kinase (216 aa).

13 to 18 is a binding site for ATP; it reads GAGKGT. Residues 33–66 are NMP; sequence TTGDALRANKTKDITHLDVEYDTPGAYMDAGELV. AMP contacts are provided by residues threonine 34, arginine 39, 64 to 66, 89 to 92, and glutamine 96; these read ELV and GYPR. An LID region spans residues 125–162; the sequence is GRRVCEDCGATFHVSFNQPETEGVCDACGGSLYQREDD. Position 126 (arginine 126) interacts with ATP. Residues cysteine 129 and cysteine 132 each contribute to the Zn(2+) site. 135-136 provides a ligand contact to ATP; the sequence is TF. Zn(2+) contacts are provided by cysteine 149 and cysteine 152. 2 residues coordinate AMP: arginine 159 and arginine 170. Residue arginine 198 coordinates ATP.

The protein belongs to the adenylate kinase family. Monomer.

It is found in the cytoplasm. The enzyme catalyses AMP + ATP = 2 ADP. Its pathway is purine metabolism; AMP biosynthesis via salvage pathway; AMP from ADP: step 1/1. Functionally, catalyzes the reversible transfer of the terminal phosphate group between ATP and AMP. Plays an important role in cellular energy homeostasis and in adenine nucleotide metabolism. The chain is Adenylate kinase from Halobacterium salinarum (strain ATCC 700922 / JCM 11081 / NRC-1) (Halobacterium halobium).